The sequence spans 220 residues: pH-response regulator palI/RIM9 homolog 1 (220 aa).

Topologically, residues 1–5 (MSHFK) are cytoplasmic. A helical transmembrane segment spans residues 6–26 (IVFLTSLSLALVFELFNTISV). At 27–89 (PITSHLFISE…NHAKYALSKL (63 aa)) the chain is on the extracellular side. A helical membrane pass occupies residues 90–110 (LLVHVLSFVCVLVFWLFAILI). Topologically, residues 111–121 (CIKWLNTSKSV) are cytoplasmic. A helical membrane pass occupies residues 122–142 (LLFAVGWSMVTFMVSLLGFLI). Topologically, residues 143–155 (DVLMFASHVTWSS) are extracellular. A helical membrane pass occupies residues 156–176 (WLMLVSAFFVALSGILLCLMI). The Cytoplasmic segment spans residues 177 to 220 (RDLSYRRFVKLQGEVDVCVPMTEPRDPDELNEIWKKKTSKREIL).

Belongs to the palI/RIM9 family.

The protein localises to the cell membrane. Required for the proteolytic cleavage of the transcription factor RIM101 in response to alkaline ambient pH. In Kluyveromyces lactis (strain ATCC 8585 / CBS 2359 / DSM 70799 / NBRC 1267 / NRRL Y-1140 / WM37) (Yeast), this protein is pH-response regulator palI/RIM9 homolog 1.